Reading from the N-terminus, the 260-residue chain is 14-3-3 protein 3 (260 aa).

Belongs to the 14-3-3 family. In terms of assembly, homodimer.

This Solanum lycopersicum (Tomato) protein is 14-3-3 protein 3 (TFT3).